The chain runs to 111 residues: WAP four-disulfide core domain protein 12 (111 aa).

Residues 1 to 23 (MGSSSFLVLMVSLALVTLVAAEG) form the signal peptide. The 48-residue stretch at 27-74 (NIEKPGVCPADNIRCIKSDPPQCHTDQDCQGIRKCCYLHCGFKCVIPV) folds into the WAP domain. Disulfide bonds link Cys-34/Cys-62, Cys-41/Cys-66, Cys-49/Cys-61, and Cys-55/Cys-70. The disordered stretch occupies residues 80 to 111 (GGNKDEDVSRPCPEPGWEAKPPGVFSTRCPQK).

It is found in the secreted. Antibacterial protein. Putative acid-stable proteinase inhibitor. The sequence is that of WAP four-disulfide core domain protein 12 (WFDC12) from Callithrix jacchus (White-tufted-ear marmoset).